Consider the following 55-residue polypeptide: Large ribosomal subunit protein bL33 (55 aa).

This sequence belongs to the bacterial ribosomal protein bL33 family.

The sequence is that of Large ribosomal subunit protein bL33 from Deinococcus deserti (strain DSM 17065 / CIP 109153 / LMG 22923 / VCD115).